The chain runs to 54 residues: MKIFFAILLILAVCSMAIWTVNGTPFEVRCATDADCARKCPGNPPCRNGFCACT.

An N-terminal signal peptide occupies residues 1–23; it reads MKIFFAILLILAVCSMAIWTVNG. 3 disulfide bridges follow: cysteine 30-cysteine 46, cysteine 36-cysteine 51, and cysteine 40-cysteine 53.

It belongs to the short scorpion toxin superfamily. Potassium channel inhibitor family. Alpha-KTx 14 subfamily. In terms of tissue distribution, expressed by the venom gland.

The protein resides in the secreted. Potassium channels inhibitor. The polypeptide is Potassium channel toxin alpha-KTx 14.x (Olivierus martensii (Manchurian scorpion)).